The chain runs to 469 residues: 3-isopropylmalate dehydratase large subunit (469 aa).

3 residues coordinate [4Fe-4S] cluster: Cys-347, Cys-408, and Cys-411.

This sequence belongs to the aconitase/IPM isomerase family. LeuC type 1 subfamily. As to quaternary structure, heterodimer of LeuC and LeuD. Requires [4Fe-4S] cluster as cofactor.

It catalyses the reaction (2R,3S)-3-isopropylmalate = (2S)-2-isopropylmalate. Its pathway is amino-acid biosynthesis; L-leucine biosynthesis; L-leucine from 3-methyl-2-oxobutanoate: step 2/4. Its function is as follows. Catalyzes the isomerization between 2-isopropylmalate and 3-isopropylmalate, via the formation of 2-isopropylmaleate. This chain is 3-isopropylmalate dehydratase large subunit, found in Actinobacillus pleuropneumoniae serotype 5b (strain L20).